The sequence spans 204 residues: High frequency lysogenization protein HflD homolog (204 aa).

This sequence belongs to the HflD family.

It localises to the cytoplasm. The protein localises to the cell inner membrane. This Shewanella amazonensis (strain ATCC BAA-1098 / SB2B) protein is High frequency lysogenization protein HflD homolog.